A 232-amino-acid chain; its full sequence is Mitochondrial import inner membrane translocase subunit Tim21 (232 aa).

The N-terminal 31 residues, 1–31 (MLPRFLWRPVLCSYRALGSPSRSLTVSYRNL), are a transit peptide targeting the mitochondrion. The chain crosses the membrane as a helical span at residues 96-116 (FTYFIVVLIGIGVTGGLFYVV).

It belongs to the TIM21 family.

Its subcellular location is the mitochondrion membrane. In terms of biological role, may participate in the translocation of transit peptide-containing proteins across the mitochondrial inner membrane. The protein is Mitochondrial import inner membrane translocase subunit Tim21 (timm21) of Xenopus laevis (African clawed frog).